The following is a 173-amino-acid chain: Protein Rv3753c (173 aa).

The chain is Protein Rv3753c from Mycobacterium tuberculosis (strain ATCC 25618 / H37Rv).